The primary structure comprises 757 residues: Endosialin (757 aa).

The signal sequence occupies residues 1 to 17 (MLLRLLLAWAAAGPTLG). At 18 to 687 (QDPWAAEPRA…EHSQRDDRWL (670 aa)) the chain is on the extracellular side. The C-type lectin domain occupies 30–156 (GPSSCYALFP…CTLAVDGYLC (127 aa)). T60 carries O-linked (GalNAc...) threonine glycosylation. A disulfide bridge links C131 with C147. One can recognise a Sushi domain in the interval 162 to 232 (GACPALQDEA…WSRAGPLCLG (71 aa)). The EGF-like; calcium-binding domain occupies 312–351 (DTDECQIAGVCQQMCVNYVGGFECYCSEGHELEADGISCS). Intrachain disulfides connect C316–C326, C322–C335, and C337–C350. O-linked (GalNAc...) threonine glycans are attached at residues T401, T428, T448, T456, T459, T472, T519, T541, T543, T544, T545, T587, T593, T594, and T595. S598 and S601 each carry an O-linked (GalNAc...) serine glycan. 2 O-linked (GalNAc...) threonine glycosylation sites follow: T612 and T619. Residues 618-627 (PTLLPSQSPT) show a composition bias toward low complexity. The segment at 618–662 (PTLLPSQSPTNQTSPISPTHPHSKAPQIPREDGPSPKLALWLPSP) is disordered. 2 O-linked (GalNAc...) serine glycosylation sites follow: S623 and S625. O-linked (GalNAc...) threonine glycans are attached at residues T627 and T630. S631 is a glycosylation site (O-linked (GalNAc...) serine). A glycan (O-linked (GalNAc...) threonine) is linked at T636. An O-linked (GalNAc...) serine glycan is attached at S640. A helical transmembrane segment spans residues 688–708 (LVALLVPTCVFLVVLLALGIV). Residues 709 to 757 (YCTRCGPHAPNKRITDCYRWVIHAGSKSPTEPMPPRGSLTGVQTCRTSV) are Cytoplasmic-facing. The segment at 737 to 757 (PTEPMPPRGSLTGVQTCRTSV) is disordered. S746 bears the Phosphoserine mark. The span at 748–757 (TGVQTCRTSV) shows a compositional bias: polar residues.

Interacts with PDGFRA; this interaction promotes PDGF receptor signaling pathway. Interacts with integrin beta-1/ITGB1. Interacts with insulin receptor/INSR; this interaction diminishes INSR autophosphorylation. Post-translationally, O-glycosylated with sialylated oligosaccharides. May be N-glycosylated. In terms of tissue distribution, expressed in tumor endothelial cells but absent or barely detectable in normal endothelial cells. Expressed in metastatic lesions of the liver and during angiogenesis of corpus luteum formation and wound healing. Expressed in vascular endothelial cells of malignant tumors but not in normal blood vessels. Expressed in stromal fibroblasts. Strongly expressed in pericytes. Expressed on stromal cells and cells with lymphoid morphology such a T-cells.

The protein localises to the membrane. In terms of biological role, cell surface glycoprotein involved in various biological processes including angiogenesis, immune response modulation, and tissue remodeling and repair. Participates in pericyte proliferation through positive modulation of the PDGF receptor signaling pathway. Acts as a scaffold for factor X, triggering allosteric changes and the spatial re-alignment of factor X with the TF-factor VIIa complex, thereby enhancing coagulation activation. Modulates the insulin signaling pathway by interacting with insulin receptor/INSR and by diminishing its capacity to be autophosphorylated in response to insulin. Also regulates LPS-induced inflammatory response in macrophages by favoring the production of proinflammatory cytokines. In human, negatively regulates T-cell proliferation compared with stromal cells where it increases proliferation. This Homo sapiens (Human) protein is Endosialin (CD248).